The following is a 218-amino-acid chain: Embryonic polyadenylate-binding protein 2-B (218 aa).

Disordered regions lie at residues 1 to 24 (MSER…ELDD) and 169 to 218 (RTNM…NNPY). In terms of domain architecture, RRM spans 93–170 (RSVYVGNVDY…RTIKVLPKRT (78 aa)). The span at 198-209 (QRPRGRPFRGRG) shows a compositional bias: basic residues.

In terms of assembly, homodimer; Upon poly(A) binding, undergoes a dimer-monomer transition that removes the polyproline motif from the RNA recognition site and allows it to be replaced by the adenosine nucleotides of poly(A).

The protein resides in the cytoplasm. In terms of biological role, binds the poly(A) tail of mRNA. Unable to interact with the cap-binding complex and is therefore unlikely to be involved in translation initiation. This Xenopus laevis (African clawed frog) protein is Embryonic polyadenylate-binding protein 2-B (Pabpn1l-b).